The primary structure comprises 251 residues: MHLSLTQQCLWPLQILLVSNLLLWENVAAVPTSDSGLGISELLTEDLFDDAVILSQHINGLAIETRRIFLSNNFSSDMFVKFTLQFNRHDEFVVNGLNSCHTSSLKTPKTEKEAKRISLPDFVKMILSILRAWDSPLYHMETELKSMTGAPFSILARVKEIEVKNKILLKRIIKIAKKVKHGIEENEEYPVWSELASLQSTNEESRFFALYKMSYCLFVDTDKVEHYLKHLKCRYFDGYMCQDPENQISLQ.

Residues 1–29 form the signal peptide; the sequence is MHLSLTQQCLWPLQILLVSNLLLWENVAA. The N-linked (GlcNAc...) asparagine glycan is linked to Asn73. Intrachain disulfides connect Cys100-Cys216 and Cys233-Cys241.

This sequence belongs to the somatotropin/prolactin family.

It localises to the secreted. This Rattus norvegicus (Rat) protein is Prolactin-7B1 (Prl7b1).